A 62-amino-acid chain; its full sequence is Large ribosomal subunit protein eL37 (62 aa).

Zn(2+) contacts are provided by Cys20, Cys23, Cys35, and Cys38. The segment at 20-38 adopts a C4-type zinc-finger fold; it reads CRRCGRRSYNVAKGYCAAC.

It belongs to the eukaryotic ribosomal protein eL37 family. Requires Zn(2+) as cofactor.

In terms of biological role, binds to the 23S rRNA. The polypeptide is Large ribosomal subunit protein eL37 (rpl37e) (Aeropyrum pernix (strain ATCC 700893 / DSM 11879 / JCM 9820 / NBRC 100138 / K1)).